The following is a 539-amino-acid chain: Phosphoenolpyruvate carboxykinase (ATP) (539 aa).

The substrate site is built by arginine 61, tyrosine 195, and lysine 201. ATP-binding positions include lysine 201, histidine 220, and 238 to 246 (GLSGTGKTT). Positions 201 and 220 each coordinate Mn(2+). Aspartate 259 contributes to the Mn(2+) binding site. Residues glutamate 287, arginine 325, and threonine 450 each contribute to the ATP site. Arginine 325 is a binding site for substrate.

The protein belongs to the phosphoenolpyruvate carboxykinase (ATP) family. Mn(2+) is required as a cofactor.

The protein localises to the cytoplasm. It catalyses the reaction oxaloacetate + ATP = phosphoenolpyruvate + ADP + CO2. Its pathway is carbohydrate biosynthesis; gluconeogenesis. In terms of biological role, involved in the gluconeogenesis. Catalyzes the conversion of oxaloacetate (OAA) to phosphoenolpyruvate (PEP) through direct phosphoryl transfer between the nucleoside triphosphate and OAA. The sequence is that of Phosphoenolpyruvate carboxykinase (ATP) from Methylorubrum populi (strain ATCC BAA-705 / NCIMB 13946 / BJ001) (Methylobacterium populi).